Here is a 202-residue protein sequence, read N- to C-terminus: Imidazoleglycerol-phosphate dehydratase (202 aa).

It belongs to the imidazoleglycerol-phosphate dehydratase family.

Its subcellular location is the cytoplasm. It catalyses the reaction D-erythro-1-(imidazol-4-yl)glycerol 3-phosphate = 3-(imidazol-4-yl)-2-oxopropyl phosphate + H2O. Its pathway is amino-acid biosynthesis; L-histidine biosynthesis; L-histidine from 5-phospho-alpha-D-ribose 1-diphosphate: step 6/9. The polypeptide is Imidazoleglycerol-phosphate dehydratase (Rhodopirellula baltica (strain DSM 10527 / NCIMB 13988 / SH1)).